Consider the following 391-residue polypeptide: 1-deoxy-D-xylulose 5-phosphate reductoisomerase (391 aa).

An NADPH-binding site is contributed by asparagine 109. Position 110 (lysine 110) interacts with 1-deoxy-D-xylulose 5-phosphate. Glutamate 111 contacts NADPH. A Mn(2+)-binding site is contributed by aspartate 135. The 1-deoxy-D-xylulose 5-phosphate site is built by serine 136, glutamate 137, serine 171, and histidine 194. Glutamate 137 lines the Mn(2+) pocket. Glycine 200 is an NADPH binding site. 4 residues coordinate 1-deoxy-D-xylulose 5-phosphate: serine 207, asparagine 212, arginine 213, and glutamate 216. Glutamate 216 is a Mn(2+) binding site.

The protein belongs to the DXR family. In terms of assembly, homodimer. The cofactor is Mg(2+). It depends on Mn(2+) as a cofactor.

The catalysed reaction is 2-C-methyl-D-erythritol 4-phosphate + NADP(+) = 1-deoxy-D-xylulose 5-phosphate + NADPH + H(+). It functions in the pathway isoprenoid biosynthesis; isopentenyl diphosphate biosynthesis via DXP pathway; isopentenyl diphosphate from 1-deoxy-D-xylulose 5-phosphate: step 1/6. Its function is as follows. Catalyzes the NADPH-dependent rearrangement and reduction of 1-deoxy-D-xylulose-5-phosphate (DXP) to 2-C-methyl-D-erythritol 4-phosphate (MEP). This Blochmanniella floridana protein is 1-deoxy-D-xylulose 5-phosphate reductoisomerase.